An 84-amino-acid polypeptide reads, in one-letter code: Acyl carrier protein (84 aa).

The Carrier domain maps to 4-80 (SETFEKVKKI…EAVDYINNQV (77 aa)). S40 carries the post-translational modification O-(pantetheine 4'-phosphoryl)serine.

The protein belongs to the acyl carrier protein (ACP) family. In terms of processing, 4'-phosphopantetheine is transferred from CoA to a specific serine of apo-ACP by AcpS. This modification is essential for activity because fatty acids are bound in thioester linkage to the sulfhydryl of the prosthetic group.

It localises to the cytoplasm. Its pathway is lipid metabolism; fatty acid biosynthesis. Carrier of the growing fatty acid chain in fatty acid biosynthesis. This chain is Acyl carrier protein, found in Nostoc sp. (strain PCC 7120 / SAG 25.82 / UTEX 2576).